Consider the following 657-residue polypeptide: Bifunctional lysine-specific demethylase and histidyl-hydroxylase NO66 (657 aa).

Disordered stretches follow at residues 1-141 (MQKA…QTSP) and 165-198 (KSCP…NSNE). Residues 32 to 41 (SAKTVDTVTD) show a composition bias toward polar residues. The span at 55–71 (AEKERRKYLQARVRAEG) shows a compositional bias: basic and acidic residues. 2 stretches are compositionally biased toward polar residues: residues 73 to 84 (SASTSSKSNATR) and 132 to 141 (RSQGLEQTSP). The residue at position 133 (Ser133) is a Phosphoserine. Thr139 is modified (phosphothreonine). At Ser140 the chain carries Phosphoserine. One can recognise a JmjC domain in the interval 315–454 (NPSTYLLGLR…NLLETLMPIV (140 aa)). 3 residues coordinate Fe cation: His355, Asp357, and His420.

This sequence belongs to the ROX family. NO66 subfamily. Requires Fe(2+) as cofactor.

It is found in the nucleus. It carries out the reaction N(6),N(6)-dimethyl-L-lysyl(36)-[histone H3] + 2 2-oxoglutarate + 2 O2 = L-lysyl(36)-[histone H3] + 2 formaldehyde + 2 succinate + 2 CO2. Oxygenase that can act as both a histone lysine demethylase and a ribosomal histidine hydroxylase. Specifically demethylates 'Lys-4' (H3K4me) and 'Lys-36' (H3K36me) of histone H3, thereby playing a central role in histone code. The protein is Bifunctional lysine-specific demethylase and histidyl-hydroxylase NO66 of Drosophila erecta (Fruit fly).